Reading from the N-terminus, the 605-residue chain is Poly(3-hydroxyalkanoate) polymerase (605 aa).

The region spanning 319 to 527 (IETAIDMIGV…VLAGSGHIAG (209 aa)) is the AB hydrolase-1 domain. Cysteine 341 is a catalytic residue.

This sequence belongs to the PHA/PHB synthase family.

It is found in the cytoplasm. This chain is Poly(3-hydroxyalkanoate) polymerase (phaC), found in Methylorubrum extorquens (Methylobacterium dichloromethanicum).